A 416-amino-acid polypeptide reads, in one-letter code: Serine hydroxymethyltransferase (416 aa).

(6S)-5,6,7,8-tetrahydrofolate-binding positions include Leu-121 and 125–127 (GHL). Lys-229 carries the N6-(pyridoxal phosphate)lysine modification.

It belongs to the SHMT family. In terms of assembly, homodimer. Pyridoxal 5'-phosphate serves as cofactor.

Its subcellular location is the cytoplasm. The catalysed reaction is (6R)-5,10-methylene-5,6,7,8-tetrahydrofolate + glycine + H2O = (6S)-5,6,7,8-tetrahydrofolate + L-serine. Its pathway is one-carbon metabolism; tetrahydrofolate interconversion. It participates in amino-acid biosynthesis; glycine biosynthesis; glycine from L-serine: step 1/1. In terms of biological role, catalyzes the reversible interconversion of serine and glycine with tetrahydrofolate (THF) serving as the one-carbon carrier. This reaction serves as the major source of one-carbon groups required for the biosynthesis of purines, thymidylate, methionine, and other important biomolecules. Also exhibits THF-independent aldolase activity toward beta-hydroxyamino acids, producing glycine and aldehydes, via a retro-aldol mechanism. This chain is Serine hydroxymethyltransferase, found in Neisseria gonorrhoeae (strain NCCP11945).